Consider the following 486-residue polypeptide: Glutamyl-tRNA(Gln) amidotransferase subunit A (486 aa).

Catalysis depends on charge relay system residues Lys80 and Ser155. Catalysis depends on Ser179, which acts as the Acyl-ester intermediate.

This sequence belongs to the amidase family. GatA subfamily. In terms of assembly, heterotrimer of A, B and C subunits.

The enzyme catalyses L-glutamyl-tRNA(Gln) + L-glutamine + ATP + H2O = L-glutaminyl-tRNA(Gln) + L-glutamate + ADP + phosphate + H(+). Allows the formation of correctly charged Gln-tRNA(Gln) through the transamidation of misacylated Glu-tRNA(Gln) in organisms which lack glutaminyl-tRNA synthetase. The reaction takes place in the presence of glutamine and ATP through an activated gamma-phospho-Glu-tRNA(Gln). In Geobacillus sp. (strain WCH70), this protein is Glutamyl-tRNA(Gln) amidotransferase subunit A.